Consider the following 399-residue polypeptide: Elongation factor Tu (399 aa).

In terms of domain architecture, tr-type G spans Lys-10–Ala-209. The G1 stretch occupies residues Gly-19–Thr-26. Gly-19 to Thr-26 contacts GTP. Position 26 (Thr-26) interacts with Mg(2+). The interval Gly-60–Ala-64 is G2. Positions Asp-81 to Gly-84 are G3. Residues Asp-81–His-85 and Asn-136–Asp-139 each bind GTP. Residues Asn-136–Asp-139 are G4. Residues Ser-174 to Leu-176 form a G5 region.

The protein belongs to the TRAFAC class translation factor GTPase superfamily. Classic translation factor GTPase family. EF-Tu/EF-1A subfamily. As to quaternary structure, monomer.

Its subcellular location is the cytoplasm. It carries out the reaction GTP + H2O = GDP + phosphate + H(+). Its function is as follows. GTP hydrolase that promotes the GTP-dependent binding of aminoacyl-tRNA to the A-site of ribosomes during protein biosynthesis. The protein is Elongation factor Tu of Campylobacter lari (strain RM2100 / D67 / ATCC BAA-1060).